The primary structure comprises 75 residues: Small ribosomal subunit protein bS18 (75 aa).

The protein belongs to the bacterial ribosomal protein bS18 family. Part of the 30S ribosomal subunit. Forms a tight heterodimer with protein bS6.

Its function is as follows. Binds as a heterodimer with protein bS6 to the central domain of the 16S rRNA, where it helps stabilize the platform of the 30S subunit. In Thermotoga maritima (strain ATCC 43589 / DSM 3109 / JCM 10099 / NBRC 100826 / MSB8), this protein is Small ribosomal subunit protein bS18.